We begin with the raw amino-acid sequence, 123 residues long: Ig heavy chain V region H8 (123 aa).

The region spanning 1–114 is the Ig-like domain; that stretch reads EVKLVESGGG…BSYWYFDVWG (114 aa).

The chain is Ig heavy chain V region H8 from Mus musculus (Mouse).